The sequence spans 856 residues: MDEALGPPPAMAEKADELTPMLSQYLELCERYDDALVLFQVGDFYETFCEAAETTARLLEITLTQREDSTGTYPMAGIPIDNAESYIETLLDAGYRVAVADQVEAAEAASGLVDRAVTRVVTPGTLTETELLAEADNNFVACLTDGYGLALLDVSTGDCYATRLDRTAGVADELERFDPAEAVVGPDAPTDCFGEDCMVTPYERSAFELDAARERVEAYFGSTALASDAEIRACGALLAYAEYARGTTTDGETEPLDYINQLTRYDPREYMLLDAVAVRSLEIFEPRHVHGLEGAALVETLDETASALGGRELRDWLRRPLLDADRIERRLDAVEALVERVSDRERASERLADVYDLERLVAAVSRGRADARDLRALESTLSVVPELRACLDDAAGESEKLASVRERLDDCTAVRELIDRAIVDSPPVEITEGGVIRDGYDERLDELRATERDGKAWIDDLEAKERERTGIDSLKVGHNSVHGYYIEVTNPNLDAVPDDYQRRQTLKNSERFYTPELKEREDEIIRAEDRADELEYERFRSVREEVAAATERIQETARAVAELDVLCALATVAAQYDYCRPTVDADGIYIEGGRHPVVERTESSFVPNPTDLPATEPLAVITGPNMSGKSTYMRQVALTSVLTQLGSFVPAERAAVPIFDRVFTRVGASDDIAGGRSTFMVEMTELSTILDAADGRSLVVLDEVGRGTSTRDGYAIAQATTEYLHDEAGAFTLFATHHHELTDVAAELPQARNYHFAAARTADGVEFDHDLRPGAAEASYGVEVAEMAGVPEAVVDRADELLGGMRSNDTPPAAAASTDGGRVPEALLAELEAVDLAETTPLEALNLLSRLKSQLD.

623–630 (GPNMSGKS) is a binding site for ATP.

The protein belongs to the DNA mismatch repair MutS family.

Functionally, this protein is involved in the repair of mismatches in DNA. It is possible that it carries out the mismatch recognition step. This protein has a weak ATPase activity. This Natronomonas pharaonis (strain ATCC 35678 / DSM 2160 / CIP 103997 / JCM 8858 / NBRC 14720 / NCIMB 2260 / Gabara) (Halobacterium pharaonis) protein is DNA mismatch repair protein MutS.